Consider the following 71-residue polypeptide: Large ribosomal subunit protein bL28 (71 aa).

It belongs to the bacterial ribosomal protein bL28 family.

The polypeptide is Large ribosomal subunit protein bL28 (Finegoldia magna (strain ATCC 29328 / DSM 20472 / WAL 2508) (Peptostreptococcus magnus)).